Here is a 654-residue protein sequence, read N- to C-terminus: DNA-directed RNA polymerase III subunit RPC3 (654 aa).

Residue T27 is modified to Phosphothreonine. 2 disordered regions span residues 381 to 401 (LSRK…ASLP) and 422 to 448 (KSLQ…EDPH). Phosphoserine occurs at positions 392 and 394. The span at 429-444 (DTQEEDEEEEDLDADT) shows a compositional bias: acidic residues. Positions 581–602 (LEWNMANLLFKKEKLKQENSTL) are leucine-zipper.

The protein belongs to the eukaryotic RPC3/POLR3C RNA polymerase subunit family. As to quaternary structure, component of the RNA polymerase III (Pol III) complex consisting of 17 subunits.

It localises to the cytoplasm. It is found in the nucleus. DNA-dependent RNA polymerase catalyzes the transcription of DNA into RNA using the four ribonucleoside triphosphates as substrates. Specific core component of RNA polymerase III which synthesizes small RNAs, such as 5S rRNA and tRNAs. This chain is DNA-directed RNA polymerase III subunit RPC3 (RPC82), found in Saccharomyces cerevisiae (strain ATCC 204508 / S288c) (Baker's yeast).